Consider the following 701-residue polypeptide: Aryl hydrocarbon receptor repressor (701 aa).

Positions 25 to 78 (TMGAEKSNPSKRHRDRLNTELDHLASLLPFSPDIISKLDKLSVLRLSVSYLRVK) constitute a bHLH domain. The PAS domain occupies 106 to 176 (PVQEGRLLLE…RQLHWAMDPP (71 aa)). Positions 409–430 (TEQRSQESTTKLTRQPSKNEPS) are enriched in polar residues. The segment at 409 to 432 (TEQRSQESTTKLTRQPSKNEPSTC) is disordered. A needed for transcriptional repression region spans residues 555-701 (ASTTSCLWLG…SKGSDGIFLP (147 aa)). Residues lysine 583 and lysine 660 each participate in a glycyl lysine isopeptide (Lys-Gly) (interchain with G-Cter in SUMO2) cross-link.

In terms of assembly, interacts with ARNT, ANKRA2, HDAC4 and HDAC5. Interacts with ARNT; forms a heterodimer with ARNT.

It localises to the cytoplasm. Its subcellular location is the nucleus. Mediates dioxin toxicity and is involved in regulation of cell growth and differentiation. Represses the transcription activity of AHR by competing with this transcription factor for heterodimer formation with the ARNT and subsequently binding to the xenobiotic response element (XRE) sequence present in the promoter regulatory region of variety of genes. Represses CYP1A1 by binding the XRE sequence and recruiting ANKRA2, HDAC4 and/or HDAC5. Autoregulates its expression by associating with its own XRE site. This chain is Aryl hydrocarbon receptor repressor (Ahrr), found in Mus musculus (Mouse).